Reading from the N-terminus, the 44-residue chain is uncharacterized protein (44 aa).

Positions M1–A28 are cleaved as a signal peptide.

This is an uncharacterized protein from Bacillus subtilis (strain 168).